Consider the following 620-residue polypeptide: Glutathione-regulated potassium-efflux system protein KefC (620 aa).

12 consecutive transmembrane segments (helical) span residues 4–24 (HTLI…PIAV), 26–46 (LGLG…PWGL), 54–74 (SILH…GLEL), 90–110 (GALQ…LLGL), 114–134 (VAEL…MQAM), 149–169 (FAVL…IPLL), 178–198 (MGAF…VVLL), 218–238 (VFSA…EEVG), 270–290 (GLLL…GTLL), 294–314 (LRIV…LWLI), 327–347 (WFAV…GAAQ), and 359–379 (SLTL…VILN). An RCK N-terminal domain is found at 399 to 518 (QPRVIIAGFG…AGVEKPERET (120 aa)). The segment at 597–620 (GWQGTEEGKHTGNMADEPETKPSS) is disordered.

Belongs to the monovalent cation:proton antiporter 2 (CPA2) transporter (TC 2.A.37) family. KefC subfamily. In terms of assembly, homodimer. Interacts with the regulatory subunit KefF.

It localises to the cell inner membrane. In terms of biological role, pore-forming subunit of a potassium efflux system that confers protection against electrophiles. Catalyzes K(+)/H(+) antiport. The polypeptide is Glutathione-regulated potassium-efflux system protein KefC (Escherichia coli O8 (strain IAI1)).